The chain runs to 828 residues: Outer membrane usher protein MrkC (828 aa).

The N-terminal stretch at 1-18 (MKQRSICPGRLSTAIAVA) is a signal peptide. A disulfide bond links Cys813 and Cys827.

This sequence belongs to the fimbrial export usher family.

The protein localises to the cell outer membrane. In terms of biological role, involved in the export and assembly of the type 3 fimbrial subunit (MrkA). This is Outer membrane usher protein MrkC (mrkC) from Klebsiella pneumoniae.